A 295-amino-acid polypeptide reads, in one-letter code: Defective in cullin neddylation protein 1 (295 aa).

The UBA-like domain occupies 8–45 (QKTKLRQFVQWTQVTEAVSLNFLAKANWNIEYAMTLYF). In terms of domain architecture, DCUN1 spans 60–272 (VDRSNIERLF…LIDQFVDYCR (213 aa)).

In terms of assembly, interacts with the cullin cul-3. Interacts with ubiquitin via its UBA-like domain. Interacts with ned-8/nedd8.

The protein localises to the nucleus. Required for neddylation of cullin components of SCF-type E3 ubiquitin ligase complexes. Neddylation of cullins play an essential role in the regulation of SCF-type complexes activity. Does not act by preventing deneddylation, but rather facilitates neddylation, possibly by acting with rbx-1 to recruit the Nedd8-charged E2 enzyme to the cullin component of SCF-type complexes. The protein is Defective in cullin neddylation protein 1 (dcn-1) of Caenorhabditis elegans.